The primary structure comprises 680 residues: DNA ligase (680 aa).

NAD(+)-binding positions include 38-42 (DAEYD), 87-88 (SL), and Glu-119. The active-site N6-AMP-lysine intermediate is the Lys-121. NAD(+)-binding residues include Arg-142, Glu-179, Lys-296, and Lys-320. Zn(2+)-binding residues include Cys-414, Cys-417, Cys-432, and Cys-438. Residues 597–680 (IEDLPLKGLT…DLLRKHGRLE (84 aa)) enclose the BRCT domain.

Belongs to the NAD-dependent DNA ligase family. LigA subfamily. The cofactor is Mg(2+). Mn(2+) is required as a cofactor.

It carries out the reaction NAD(+) + (deoxyribonucleotide)n-3'-hydroxyl + 5'-phospho-(deoxyribonucleotide)m = (deoxyribonucleotide)n+m + AMP + beta-nicotinamide D-nucleotide.. Functionally, DNA ligase that catalyzes the formation of phosphodiester linkages between 5'-phosphoryl and 3'-hydroxyl groups in double-stranded DNA using NAD as a coenzyme and as the energy source for the reaction. It is essential for DNA replication and repair of damaged DNA. This chain is DNA ligase, found in Cellvibrio japonicus (strain Ueda107) (Pseudomonas fluorescens subsp. cellulosa).